The following is a 601-amino-acid chain: Bifunctional ribose 1,5-bisphosphokinase-thymidine phosphorylase (601 aa).

Residues Met-1–Ala-177 form a ribose 1,5-bisphosphokinase region. A thymidinephosphorylase region spans residues Leu-178–Asp-601.

In the N-terminal section; belongs to the ribose 1,5-bisphosphokinase family. It in the C-terminal section; belongs to the thymidine/pyrimidine-nucleoside phosphorylase family. Type 2 subfamily.

The catalysed reaction is alpha-D-ribose 1,5-bisphosphate + ATP = 5-phospho-alpha-D-ribose 1-diphosphate + ADP. It catalyses the reaction thymidine + phosphate = 2-deoxy-alpha-D-ribose 1-phosphate + thymine. It functions in the pathway metabolic intermediate biosynthesis; 5-phospho-alpha-D-ribose 1-diphosphate biosynthesis; 5-phospho-alpha-D-ribose 1-diphosphate from D-ribose 5-phosphate (route II): step 3/3. Catalyzes the phosphorylation of ribose 1,5-bisphosphate to 5-phospho-D-ribosyl alpha-1-diphosphate (PRPP). The chain is Bifunctional ribose 1,5-bisphosphokinase-thymidine phosphorylase (phnN) from Cupriavidus necator (strain ATCC 17699 / DSM 428 / KCTC 22496 / NCIMB 10442 / H16 / Stanier 337) (Ralstonia eutropha).